A 542-amino-acid polypeptide reads, in one-letter code: GMP synthase [glutamine-hydrolyzing] (542 aa).

In terms of domain architecture, Glutamine amidotransferase type-1 spans 28–218 (MIVILDFGSQ…VYHICECEPT (191 aa)). The Nucleophile role is filled by Cys105. Catalysis depends on residues His192 and Glu194. In terms of domain architecture, GMPS ATP-PPase spans 219–417 (WTTEAFVDET…IGLPEEIVRR (199 aa)). 246–252 (SGGVDSS) lines the ATP pocket.

Homodimer.

It carries out the reaction XMP + L-glutamine + ATP + H2O = GMP + L-glutamate + AMP + diphosphate + 2 H(+). The protein operates within purine metabolism; GMP biosynthesis; GMP from XMP (L-Gln route): step 1/1. Catalyzes the synthesis of GMP from XMP. This Crocosphaera subtropica (strain ATCC 51142 / BH68) (Cyanothece sp. (strain ATCC 51142)) protein is GMP synthase [glutamine-hydrolyzing].